A 201-amino-acid chain; its full sequence is Holliday junction branch migration complex subunit RuvA (201 aa).

The segment at 1–64 (MYEYIKGKYI…QDFIGLYGFL (64 aa)) is domain I. Positions 65–143 (TKDELEMFNK…STDISKGNSE (79 aa)) are domain II. The segment at 144-154 (INNLDVDYDEH) is flexible linker. The domain III stretch occupies residues 154–201 (HSKKLEEVRFALNSLGYSEKETDRAINNVDKSEGIENIIKSCLRFLMN).

The protein belongs to the RuvA family. As to quaternary structure, homotetramer. Forms an RuvA(8)-RuvB(12)-Holliday junction (HJ) complex. HJ DNA is sandwiched between 2 RuvA tetramers; dsDNA enters through RuvA and exits via RuvB. An RuvB hexamer assembles on each DNA strand where it exits the tetramer. Each RuvB hexamer is contacted by two RuvA subunits (via domain III) on 2 adjacent RuvB subunits; this complex drives branch migration. In the full resolvosome a probable DNA-RuvA(4)-RuvB(12)-RuvC(2) complex forms which resolves the HJ.

The protein localises to the cytoplasm. In terms of biological role, the RuvA-RuvB-RuvC complex processes Holliday junction (HJ) DNA during genetic recombination and DNA repair, while the RuvA-RuvB complex plays an important role in the rescue of blocked DNA replication forks via replication fork reversal (RFR). RuvA specifically binds to HJ cruciform DNA, conferring on it an open structure. The RuvB hexamer acts as an ATP-dependent pump, pulling dsDNA into and through the RuvAB complex. HJ branch migration allows RuvC to scan DNA until it finds its consensus sequence, where it cleaves and resolves the cruciform DNA. This Clostridium acetobutylicum (strain ATCC 824 / DSM 792 / JCM 1419 / IAM 19013 / LMG 5710 / NBRC 13948 / NRRL B-527 / VKM B-1787 / 2291 / W) protein is Holliday junction branch migration complex subunit RuvA.